Consider the following 380-residue polypeptide: Flap endonuclease 1 (380 aa).

The segment at M1–R104 is N-domain. A Symmetric dimethylarginine; by PRMT5 modification is found at R19. Residue D34 participates in Mg(2+) binding. DNA contacts are provided by R47 and R70. K80 is subject to N6-acetyllysine. Position 86 (D86) interacts with Mg(2+). Symmetric dimethylarginine; by PRMT5 occurs at positions 100 and 104. The segment at E122–H253 is I-domain. Positions 158, 160, 179, and 181 each coordinate Mg(2+). E158 lines the DNA pocket. S187 bears the Phosphoserine; by CDK2 mark. At R192 the chain carries Symmetric dimethylarginine; by PRMT5. The residue at position 197 (S197) is a Phosphoserine. DNA-binding residues include G231 and D233. Position 233 (D233) interacts with Mg(2+). Residues S255, S293, and S335 each carry the phosphoserine modification. T336 is modified (phosphothreonine). The segment at T336 to F344 is interaction with PCNA. Residues S349–K380 are disordered. An N6-acetyllysine mark is found at K354, K375, K377, and K380. Residues A363–K380 show a composition bias toward basic residues.

The protein belongs to the XPG/RAD2 endonuclease family. FEN1 subfamily. As to quaternary structure, interacts with PCNA. Three molecules of FEN1 bind to one PCNA trimer with each molecule binding to one PCNA monomer. PCNA stimulates the nuclease activity without altering cleavage specificity. The C-terminal domain binds EP300; can bind simultaneously to both PCNA and EP300. Interacts with DDX11; this interaction is direct and increases flap endonuclease activity of FEN1. Interacts with WDR4; regulating its endonuclease activity. Interacts with POLB. Requires Mg(2+) as cofactor. Post-translationally, acetylated by EP300. Acetylation inhibits both endonuclease and exonuclease activity. Acetylation also reduces DNA-binding activity but does not affect interaction with PCNA or EP300. Phosphorylation upon DNA damage induces relocalization to the nuclear plasma. Phosphorylation at Ser-187 by CDK2 occurs during late S-phase and results in dissociation from PCNA. In terms of processing, methylation at Arg-192 by PRMT5 impedes Ser-187 phosphorylation and increases interaction with PCNA.

Its subcellular location is the nucleus. The protein resides in the nucleolus. The protein localises to the nucleoplasm. It is found in the mitochondrion. In terms of biological role, structure-specific nuclease with 5'-flap endonuclease and 5'-3' exonuclease activities involved in DNA replication and repair. During DNA replication, cleaves the 5'-overhanging flap structure that is generated by displacement synthesis when DNA polymerase encounters the 5'-end of a downstream Okazaki fragment. It enters the flap from the 5'-end and then tracks to cleave the flap base, leaving a nick for ligation. Also involved in the long patch base excision repair (LP-BER) pathway, by cleaving within the apurinic/apyrimidinic (AP) site-terminated flap. Acts as a genome stabilization factor that prevents flaps from equilibrating into structures that lead to duplications and deletions. Also possesses 5'-3' exonuclease activity on nicked or gapped double-stranded DNA, and exhibits RNase H activity. Also involved in replication and repair of rDNA and in repairing mitochondrial DNA. The polypeptide is Flap endonuclease 1 (Ovis aries (Sheep)).